We begin with the raw amino-acid sequence, 927 residues long: Isoleucine--tRNA ligase (927 aa).

The 'HIGH' region motif lies at 60 to 70 (PYANGNIHLGH). E557 contributes to the L-isoleucyl-5'-AMP binding site. The 'KMSKS' region signature appears at 598-602 (KMSKS). ATP is bound at residue K601. Positions 895, 898, 915, and 918 each coordinate Zn(2+).

Belongs to the class-I aminoacyl-tRNA synthetase family. IleS type 1 subfamily. As to quaternary structure, monomer. Zn(2+) serves as cofactor.

Its subcellular location is the cytoplasm. The enzyme catalyses tRNA(Ile) + L-isoleucine + ATP = L-isoleucyl-tRNA(Ile) + AMP + diphosphate. Its function is as follows. Catalyzes the attachment of isoleucine to tRNA(Ile). As IleRS can inadvertently accommodate and process structurally similar amino acids such as valine, to avoid such errors it has two additional distinct tRNA(Ile)-dependent editing activities. One activity is designated as 'pretransfer' editing and involves the hydrolysis of activated Val-AMP. The other activity is designated 'posttransfer' editing and involves deacylation of mischarged Val-tRNA(Ile). In Syntrophomonas wolfei subsp. wolfei (strain DSM 2245B / Goettingen), this protein is Isoleucine--tRNA ligase.